A 347-amino-acid chain; its full sequence is GPN-loop GTPase 2 (347 aa).

12 to 17 (GSGKST) contributes to the GTP binding site. The Gly-Pro-Asn (GPN)-loop; involved in dimer interface signature appears at 69–71 (GPN). 175–178 (SKID) contacts GTP.

Belongs to the GPN-loop GTPase family. In terms of assembly, heterodimers with NPA3/GPN1 or GPN3. Binds to RNA polymerase II (RNAPII).

The protein resides in the cytoplasm. Its function is as follows. Small GTPase required for proper localization of RNA polymerase II and III (RNAPII and RNAPIII). May act at an RNAP assembly step prior to nuclear import. Required for establishment of sister chromatid cohesion. In Saccharomyces cerevisiae (strain ATCC 204508 / S288c) (Baker's yeast), this protein is GPN-loop GTPase 2.